Reading from the N-terminus, the 272-residue chain is Pantothenate synthetase (272 aa).

27–34 provides a ligand contact to ATP; sequence MGALHNGH. Catalysis depends on histidine 34, which acts as the Proton donor. Glutamine 58 lines the (R)-pantoate pocket. Glutamine 58 is a binding site for beta-alanine. 143–146 lines the ATP pocket; it reads GKKD. (R)-pantoate is bound at residue glutamine 149. Residues valine 172 and 180-183 each bind ATP; that span reads LSSR.

It belongs to the pantothenate synthetase family. Homodimer.

Its subcellular location is the cytoplasm. It catalyses the reaction (R)-pantoate + beta-alanine + ATP = (R)-pantothenate + AMP + diphosphate + H(+). Its pathway is cofactor biosynthesis; (R)-pantothenate biosynthesis; (R)-pantothenate from (R)-pantoate and beta-alanine: step 1/1. Its function is as follows. Catalyzes the condensation of pantoate with beta-alanine in an ATP-dependent reaction via a pantoyl-adenylate intermediate. This is Pantothenate synthetase from Aliarcobacter butzleri (strain RM4018) (Arcobacter butzleri).